The chain runs to 207 residues: Cytidylate kinase (207 aa).

7-15 (GVAASGKSS) is a binding site for ATP.

Belongs to the cytidylate kinase family. Type 1 subfamily.

It is found in the cytoplasm. It catalyses the reaction CMP + ATP = CDP + ADP. It carries out the reaction dCMP + ATP = dCDP + ADP. The chain is Cytidylate kinase from Deinococcus deserti (strain DSM 17065 / CIP 109153 / LMG 22923 / VCD115).